The following is a 1232-amino-acid chain: DNA topoisomerase 2 (1232 aa).

ATP is bound by residues asparagine 65, asparagine 94, serine 122 to asparagine 124, glycine 135 to lysine 142, and glutamine 352 to lysine 354. A Toprim domain is found at arginine 432–isoleucine 546. Positions 438, 515, and 517 each coordinate Mg(2+). Residues leucine 681 to leucine 1097 form the Topo IIA-type catalytic domain. Catalysis depends on tyrosine 771, which acts as the O-(5'-phospho-DNA)-tyrosine intermediate. Residues serine 952 to glycine 961 are interaction with DNA. The tract at residues tyrosine 1161–serine 1184 is disordered. Gly residues predominate over residues serine 1175 to serine 1184.

Belongs to the type II topoisomerase family. As to quaternary structure, homodimer. The cofactor is Mg(2+). Requires Mn(2+) as cofactor. Ca(2+) is required as a cofactor.

Its subcellular location is the nucleus. The enzyme catalyses ATP-dependent breakage, passage and rejoining of double-stranded DNA.. Its function is as follows. Control of topological states of DNA by transient breakage and subsequent rejoining of DNA strands. Topoisomerase II makes double-strand breaks. The polypeptide is DNA topoisomerase 2 (TOP2) (Trypanosoma cruzi).